The sequence spans 189 residues: Bilin-binding protein (189 aa).

The first 15 residues, 1 to 15, serve as a signal peptide directing secretion; it reads MQYLIVLALVAAASA. 2 disulfide bridges follow: Cys-23/Cys-130 and Cys-57/Cys-185.

This sequence belongs to the calycin superfamily. Lipocalin family. In terms of assembly, homotetramer. Hemolymph.

The protein localises to the secreted. Functionally, this protein binds the blue pigments bilins. The polypeptide is Bilin-binding protein (Pieris brassicae (White butterfly)).